The sequence spans 554 residues: Formate--tetrahydrofolate ligase (554 aa).

64 to 71 (TPAGEGKS) is a binding site for ATP.

This sequence belongs to the formate--tetrahydrofolate ligase family.

It carries out the reaction (6S)-5,6,7,8-tetrahydrofolate + formate + ATP = (6R)-10-formyltetrahydrofolate + ADP + phosphate. It participates in one-carbon metabolism; tetrahydrofolate interconversion. The sequence is that of Formate--tetrahydrofolate ligase from Leuconostoc citreum (strain KM20).